Here is a 408-residue protein sequence, read N- to C-terminus: Zinc finger protein 764 (408 aa).

The 72-residue stretch at 26–97 folds into the KRAB domain; the sequence is VSFADVAVYF…AAQDPEVAKC (72 aa). The interval 91–167 is disordered; that stretch reads DPEVAKCQTQ…GRPSLCAHPP (77 aa). 7 consecutive C2H2-type zinc fingers follow at residues 175 to 197, 203 to 225, 231 to 253, 259 to 281, 287 to 309, 315 to 337, and 343 to 365; these read HGCY…VYSH, FHCT…RAIH, HRCL…LRVH, YGCA…RRVH, FPCP…VRTH, YPCP…RRTH, and YPCP…QWVH.

This sequence belongs to the krueppel C2H2-type zinc-finger protein family. Interacts (via KRAB domain) with NR3C1/GR (via NR LBD domain); the interaction regulates transcription factor activity of NR3C1 by directing its actions toward certain biologic pathways.

It localises to the nucleus. Functionally, zinc finger protein that functions as a cofactor for steroid hormone receptors, such as NR3C1/GR. Directs NR3C1/GR transcriptional activity toward specific biologic pathways by changing NR3C1/GR binding and transcriptional activity on the glucocorticoid-responsive genes. In Homo sapiens (Human), this protein is Zinc finger protein 764.